The sequence spans 238 residues: Peptidyl-tRNA hydrolase (238 aa).

Tyr14 contributes to the tRNA binding site. His19 acts as the Proton acceptor in catalysis. Positions 64, 66, and 112 each coordinate tRNA. A disordered region spans residues 202–225; sequence PAAQSHIHQARNSAQPKKLPETGP. The segment covering 207 to 216 has biased composition (polar residues); the sequence is HIHQARNSAQ.

Belongs to the PTH family. Monomer.

The protein resides in the cytoplasm. The enzyme catalyses an N-acyl-L-alpha-aminoacyl-tRNA + H2O = an N-acyl-L-amino acid + a tRNA + H(+). Hydrolyzes ribosome-free peptidyl-tRNAs (with 1 or more amino acids incorporated), which drop off the ribosome during protein synthesis, or as a result of ribosome stalling. Its function is as follows. Catalyzes the release of premature peptidyl moieties from peptidyl-tRNA molecules trapped in stalled 50S ribosomal subunits, and thus maintains levels of free tRNAs and 50S ribosomes. The chain is Peptidyl-tRNA hydrolase from Agrobacterium fabrum (strain C58 / ATCC 33970) (Agrobacterium tumefaciens (strain C58)).